We begin with the raw amino-acid sequence, 323 residues long: Acetyl-coenzyme A carboxylase carboxyl transferase subunit alpha (323 aa).

In terms of domain architecture, CoA carboxyltransferase C-terminal spans 39-293 (RLAGKSQQLT…KRSLAESLRQ (255 aa)).

It belongs to the AccA family. Acetyl-CoA carboxylase is a heterohexamer composed of biotin carboxyl carrier protein (AccB), biotin carboxylase (AccC) and two subunits each of ACCase subunit alpha (AccA) and ACCase subunit beta (AccD).

The protein localises to the cytoplasm. The catalysed reaction is N(6)-carboxybiotinyl-L-lysyl-[protein] + acetyl-CoA = N(6)-biotinyl-L-lysyl-[protein] + malonyl-CoA. The protein operates within lipid metabolism; malonyl-CoA biosynthesis; malonyl-CoA from acetyl-CoA: step 1/1. Its function is as follows. Component of the acetyl coenzyme A carboxylase (ACC) complex. First, biotin carboxylase catalyzes the carboxylation of biotin on its carrier protein (BCCP) and then the CO(2) group is transferred by the carboxyltransferase to acetyl-CoA to form malonyl-CoA. The sequence is that of Acetyl-coenzyme A carboxylase carboxyl transferase subunit alpha from Cupriavidus necator (strain ATCC 17699 / DSM 428 / KCTC 22496 / NCIMB 10442 / H16 / Stanier 337) (Ralstonia eutropha).